The sequence spans 421 residues: Gamma-glutamyl phosphate reductase (421 aa).

It belongs to the gamma-glutamyl phosphate reductase family.

It localises to the cytoplasm. The enzyme catalyses L-glutamate 5-semialdehyde + phosphate + NADP(+) = L-glutamyl 5-phosphate + NADPH + H(+). Its pathway is amino-acid biosynthesis; L-proline biosynthesis; L-glutamate 5-semialdehyde from L-glutamate: step 2/2. Catalyzes the NADPH-dependent reduction of L-glutamate 5-phosphate into L-glutamate 5-semialdehyde and phosphate. The product spontaneously undergoes cyclization to form 1-pyrroline-5-carboxylate. This is Gamma-glutamyl phosphate reductase from Acinetobacter baylyi (strain ATCC 33305 / BD413 / ADP1).